A 344-amino-acid polypeptide reads, in one-letter code: MTKYKLEYIWLDGYTPTPNLRGKTQIKEFASFPTLEQLPLWGFDGSSTQQAEGHSSDCVLKPVAVFPDAARTNGVLVMCEVMMPDGKTPHASNKRATILDDAGAWFGFEQEYFFYKDGRPLGFPTSGYPAPQGPYYTGVGFSNVGDVARKIVEEHLDLCLAAGINHEGINAEVAKGQWEFQIFGKGSKKAADEMWMARYLMLRLTEKYGIDIEFHCKPLGDTDWNGSGMHANFSTEYMRTVGGKEYFEALMAAFDKNLMDHIAVYGPDNDKRLTGKHETAPWNKFSYGVADRGASIRVPHSFVNNGYKGYLEDRRPNSQGDPYQIASQILKTISSVPTEKKAVA.

The GS beta-grasp domain maps to 4–86 (YKLEYIWLDG…VMCEVMMPDG (83 aa)). In terms of domain architecture, GS catalytic spans 89-344 (PHASNKRATI…SVPTEKKAVA (256 aa)). Mg(2+) is bound by residues Glu109 and Glu111. Glu167 is an ATP binding site. Glu172 and Glu179 together coordinate Mg(2+). Glu278 provides a ligand contact to L-glutamate.

Belongs to the glutamine synthetase family. Homooctamer and homotetramer. Mg(2+) serves as cofactor.

The protein localises to the cytoplasm. It catalyses the reaction L-glutamate + NH4(+) + ATP = L-glutamine + ADP + phosphate + H(+). In terms of biological role, catalyzes the ATP-dependent biosynthesis of glutamine from glutamate and ammonia. The sequence is that of Glutamine synthetase from Bradyrhizobium diazoefficiens (strain JCM 10833 / BCRC 13528 / IAM 13628 / NBRC 14792 / USDA 110).